The primary structure comprises 150 residues: Large ribosomal subunit protein uL15 (150 aa).

This sequence belongs to the universal ribosomal protein uL15 family. Part of the 50S ribosomal subunit.

Its function is as follows. Binds to the 23S rRNA. The protein is Large ribosomal subunit protein uL15 of Anaplasma marginale (strain Florida).